A 209-amino-acid chain; its full sequence is Ion-translocating oxidoreductase complex subunit G (209 aa).

Residues 1-8 are Cytoplasmic-facing; it reads MLTAIRKN. The helical transmembrane segment at 9–29 threads the bilayer; that stretch reads GLILAVFACVSTGLVALTYAL. The Periplasmic portion of the chain corresponds to 30–209; the sequence is TAEQIQQQEQ…HNQPNPCEGQ (180 aa). Thr-175 carries the post-translational modification FMN phosphoryl threonine.

Belongs to the RnfG family. In terms of assembly, the complex is composed of six subunits: RnfA, RnfB, RnfC, RnfD, RnfE and RnfG. The cofactor is FMN.

The protein localises to the cell inner membrane. Its function is as follows. Part of a membrane-bound complex that couples electron transfer with translocation of ions across the membrane. The protein is Ion-translocating oxidoreductase complex subunit G of Vibrio cholerae serotype O1 (strain ATCC 39541 / Classical Ogawa 395 / O395).